The chain runs to 249 residues: MSGLLDLLEIRKAYGDTRVLEGVALSLAPGEVVSLLGPSGCGKSTLLRIAAGLDDDFQGTVERNPILGFGPDGENGRSGGIGVVFQEPRLLPWLTVAQNVGFADGWLEDEHWVERLLADVGLAGCGGLLPKQLSGGMAQRAAIARGLYGRPQVLLLDEPFSAVDAFTRMRLQDLLQDVVQNYEISVLLVTHDLDEAFYLADRVLLMGGRPGHIRREFHVPLARPRDRRAVELAYLRGEALTEMQRAHVL.

The region spanning 5 to 233 (LDLLEIRKAY…PRDRRAVELA (229 aa)) is the ABC transporter domain. An ATP-binding site is contributed by 37–44 (GPSGCGKS).

This sequence belongs to the ABC transporter superfamily. Aliphatic sulfonates importer (TC 3.A.1.17.2) family. As to quaternary structure, the complex is composed of two ATP-binding proteins (SsuB), two transmembrane proteins (SsuC) and a solute-binding protein (SsuA).

The protein localises to the cell inner membrane. The enzyme catalyses ATP + H2O + aliphatic sulfonate-[sulfonate-binding protein]Side 1 = ADP + phosphate + aliphatic sulfonateSide 2 + [sulfonate-binding protein]Side 1.. Its function is as follows. Part of the ABC transporter complex SsuABC involved in aliphatic sulfonates import. Responsible for energy coupling to the transport system. The protein is Aliphatic sulfonates import ATP-binding protein SsuB 2 of Pseudomonas aeruginosa (strain ATCC 15692 / DSM 22644 / CIP 104116 / JCM 14847 / LMG 12228 / 1C / PRS 101 / PAO1).